Consider the following 298-residue polypeptide: Nucleotide-binding protein GK3066 (298 aa).

17–24 contacts ATP; sequence GMSGAGKT. 68–71 contacts GTP; that stretch reads DLRS.

This sequence belongs to the RapZ-like family.

Functionally, displays ATPase and GTPase activities. The chain is Nucleotide-binding protein GK3066 from Geobacillus kaustophilus (strain HTA426).